Here is a 436-residue protein sequence, read N- to C-terminus: MMATQTLSIDSYQDGQQMQVVTELKTEQDPNCSDPDAEGVSPPPIESQTPMDADKQAIYRHPLFPLLALLFEKCEQSTQGSEGTTSASFDVDIENFVRKQEKDGKPFFCEDPETDNLMVKAIQVLRIHLLELEKVNELCKDFCSRYIACLKTKMNSETLLSGEPGSPYSPVQSQQIQSAITGTLSPQGIVVPASALQQGNVTMATVAGGTVYQPVTVVTPQGQVVTQALSPGTIRIQNSQLQLQLNQDLSILHQEDGSSKNKRGVLPKHATNVMRSWLFQHIGHPYPTEDEKKQIAAQTNLTLLQVNNWFINARRRILQPMLDSSCSETPKTKKKPAQNRPVQRFWPDSLASGVAQATPSELAMSEGAVVTITTPVNMNVDSLQSLSSDGATLAVQQVMMAGQSEDESVDSTEDEGGALAPTHISGLVLENSDSLQ.

Residues 23–50 (ELKTEQDPNCSDPDAEGVSPPPIESQTP) form a disordered region. Residues S33 and S41 each carry the phosphoserine modification. The 84-residue stretch at 80-163 (GSEGTTSASF…MNSETLLSGE (84 aa)) folds into the MEIS N-terminal domain. Residues 259 to 321 (SKNKRGVLPK…NARRRILQPM (63 aa)) constitute a DNA-binding region (homeobox; TALE-type). The interval 401–436 (AGQSEDESVDSTEDEGGALAPTHISGLVLENSDSLQ) is disordered. Positions 404-416 (SEDESVDSTEDEG) are enriched in acidic residues.

This sequence belongs to the TALE/MEIS homeobox family. In terms of assembly, interacts with MN1.

It localises to the nucleus. Activates transcription in the presence of PBX1A and HOXA1. In terms of biological role, (Microbial infection) In complex with PBX1, binds to the 5'-TGATTGAC-3' consensus sequence in the U5 region of Moloney murine leukemia virus and promotes viral transcription. In Mus musculus (Mouse), this protein is Homeobox protein PKNOX1.